The sequence spans 652 residues: Carboxypeptidase Z (652 aa).

The first 20 residues, 1–20 (MPTTPLLLAALAALAALAVA), serve as a signal peptide directing secretion. In terms of domain architecture, FZ spans 41-163 (THSATCVDLH…APEEEGCYDP (123 aa)). Cystine bridges form between cysteine 46/cysteine 112, cysteine 54/cysteine 105, cysteine 96/cysteine 132, cysteine 121/cysteine 160, and cysteine 125/cysteine 149. Residue asparagine 60 is glycosylated (N-linked (GlcNAc...) asparagine). Residues 189-505 (AHHSYAQMVR…EPLLNFLEMV (317 aa)) form the Peptidase M14 domain. Positions 251 and 254 each coordinate Zn(2+). Asparagine 284 carries an N-linked (GlcNAc...) asparagine glycan. Histidine 383 is a Zn(2+) binding site. The active-site Proton donor/acceptor is the glutamate 475. Residues 594–628 (FLPGPSRALPRSLDPQGAPAQLDFEPPRARRQPAS) form a disordered region.

It belongs to the peptidase M14 family. Zn(2+) serves as cofactor. As to expression, abundantly expressed in the placenta, with low to moderate levels in the brain, lung, thymus and kidney.

The protein localises to the secreted. It is found in the extracellular space. The protein resides in the extracellular matrix. Inhibited by 2-mercaptomethyl-3-guanidinoethylthiopropanoic acid (MGTA) and guanidinoethylmercaptosuccinic acid (GEMSA). Inhibited by chelating agents such as EDTA and EGTA. In terms of biological role, cleaves substrates with C-terminal arginine residues. Probably modulates the Wnt signaling pathway, by cleaving some undefined protein. May play a role in cleavage during prohormone processing. The protein is Carboxypeptidase Z (Cpz) of Rattus norvegicus (Rat).